Reading from the N-terminus, the 517-residue chain is NEDD8-activating enzyme E1 regulatory subunit (517 aa).

This sequence belongs to the ubiquitin-activating E1 family. ULA1 subfamily. In terms of assembly, heterodimer of uba3 and ula1. The complex binds NEDD8/ubl1 and ubc12.

Its subcellular location is the cytoplasm. The protein localises to the nucleus. Its pathway is protein modification; protein neddylation. In terms of biological role, regulatory subunit of the dimeric uba3-ula1 E1 enzyme. E1 activates NEDD8/ubl1 by first adenylating its C-terminal glycine residue with ATP, thereafter linking this residue to the side chain of the catalytic cysteine, yielding a NEDD8-UBA3 thioester and free AMP. E1 finally transfers NEDD8 to the catalytic cysteine of ubc12. This Schizosaccharomyces pombe (strain 972 / ATCC 24843) (Fission yeast) protein is NEDD8-activating enzyme E1 regulatory subunit (uba5).